Here is a 273-residue protein sequence, read N- to C-terminus: Dermonecrotic toxin LdSicTox-alphaIB3b (273 aa).

H5 is a catalytic residue. Positions 25 and 27 each coordinate Mg(2+). H41 serves as the catalytic Nucleophile. 2 cysteine pairs are disulfide-bonded: C45-C51 and C47-C190. D85 is a binding site for Mg(2+).

The protein belongs to the arthropod phospholipase D family. Class II subfamily. Mg(2+) serves as cofactor. Expressed by the venom gland.

The protein localises to the secreted. It carries out the reaction an N-(acyl)-sphingosylphosphocholine = an N-(acyl)-sphingosyl-1,3-cyclic phosphate + choline. The catalysed reaction is an N-(acyl)-sphingosylphosphoethanolamine = an N-(acyl)-sphingosyl-1,3-cyclic phosphate + ethanolamine. The enzyme catalyses a 1-acyl-sn-glycero-3-phosphocholine = a 1-acyl-sn-glycero-2,3-cyclic phosphate + choline. It catalyses the reaction a 1-acyl-sn-glycero-3-phosphoethanolamine = a 1-acyl-sn-glycero-2,3-cyclic phosphate + ethanolamine. Dermonecrotic toxins cleave the phosphodiester linkage between the phosphate and headgroup of certain phospholipids (sphingolipid and lysolipid substrates), forming an alcohol (often choline) and a cyclic phosphate. This toxin acts on sphingomyelin (SM). It may also act on ceramide phosphoethanolamine (CPE), lysophosphatidylcholine (LPC) and lysophosphatidylethanolamine (LPE), but not on lysophosphatidylserine (LPS), and lysophosphatidylglycerol (LPG). It acts by transphosphatidylation, releasing exclusively cyclic phosphate products as second products. Induces dermonecrosis, hemolysis, increased vascular permeability, edema, inflammatory response, and platelet aggregation. The sequence is that of Dermonecrotic toxin LdSicTox-alphaIB3b from Loxosceles deserta (Desert recluse spider).